The sequence spans 570 residues: Capsid vertex component 2 (570 aa).

The segment at 1–54 (MALSGHVLIDPARLPRDTGPELMWAPSLRNSLRVSPEALELAEREAERARSERW) is interaction with major capsid protein/MCP. Residues 102 to 123 (QVRSPSTGGRSAPAPPSPSPAQ) are disordered.

The protein belongs to the herpesviridae CVC2 protein family. Heterodimerizes with CVC1. Interacts with major capsid protein/MCP and triplex capsid protein 1/TRX1 at the pentamer vertices. Interacts with the large tegument protein/LTP.

The protein resides in the virion. It localises to the host nucleus. In terms of biological role, capsid vertex-specific component that plays a role during viral DNA encapsidation, assuring correct genome cleavage and presumably stabilizing capsids that contain full-length viral genomes. Participates in the interaction between the capsid and the tegument through interaction with the large tegument protein/LTP. The polypeptide is Capsid vertex component 2 (Homo sapiens (Human)).